A 312-amino-acid chain; its full sequence is ECF RNA polymerase sigma factor SigJ (312 aa).

Residues 6–65 are sigma-70 factor domain-2; sequence FEALRQHLMSVAYRLTGTVADAEDIVQEAWLRWDSPDTVIADPRAWLTTVVSRLGLDKLR. A Polymerase core binding motif is present at residues 29 to 32; the sequence is DIVQ. A sigma-70 factor domain-4 region spans residues 107–155; that stretch reads MVVLERLRPDQRVAFVLHDGFAVPFAEVAEVLGTSEAAARQLASRARKA. A DNA-binding region (H-T-H motif) is located at residues 131 to 150; sequence FAEVAEVLGTSEAAARQLAS. The tract at residues 293 to 312 is disordered; that stretch reads GSPLKERRAQPTGRGRHHRN.

It belongs to the sigma-70 factor family. ECF subfamily. Interacts transiently with the RNA polymerase catalytic core formed by RpoA, RpoB, RpoC and RpoZ (2 alpha, 1 beta, 1 beta' and 1 omega subunit) to form the RNA polymerase holoenzyme that can initiate transcription.

Sigma factors are initiation factors that promote the attachment of RNA polymerase to specific initiation sites and are then released. Extracytoplasmic function (ECF) sigma factors are held in an inactive form by an anti-sigma factor until released, although no anti-sigma factor is known for this protein. Regulates the promoter of SigI, may not be autoregulated. The polypeptide is ECF RNA polymerase sigma factor SigJ (sigJ) (Mycobacterium tuberculosis (strain ATCC 25618 / H37Rv)).